A 101-amino-acid polypeptide reads, in one-letter code: Putative pterin-4-alpha-carbinolamine dehydratase (101 aa).

The protein belongs to the pterin-4-alpha-carbinolamine dehydratase family.

The catalysed reaction is (4aS,6R)-4a-hydroxy-L-erythro-5,6,7,8-tetrahydrobiopterin = (6R)-L-erythro-6,7-dihydrobiopterin + H2O. This chain is Putative pterin-4-alpha-carbinolamine dehydratase, found in Nitrobacter winogradskyi (strain ATCC 25391 / DSM 10237 / CIP 104748 / NCIMB 11846 / Nb-255).